The primary structure comprises 152 residues: Endoribonuclease YbeY (152 aa).

3 residues coordinate Zn(2+): histidine 118, histidine 122, and histidine 128.

It belongs to the endoribonuclease YbeY family. The cofactor is Zn(2+).

It is found in the cytoplasm. In terms of biological role, single strand-specific metallo-endoribonuclease involved in late-stage 70S ribosome quality control and in maturation of the 3' terminus of the 16S rRNA. The protein is Endoribonuclease YbeY of Pelotomaculum thermopropionicum (strain DSM 13744 / JCM 10971 / SI).